The following is a 643-amino-acid chain: Phosphatidylinositol-3,5-bisphosphate 3-phosphatase MTMR2 (643 aa).

Positions 1–52 (MEKSSSCESLGAQLPAARLPSEDSLSSASTSHSENSVHTKSASAISSDSIST) are disordered. A phosphoserine mark is found at serine 6 and serine 9. Polar residues predominate over residues 23–40 (DSLSSASTSHSENSVHTK). The span at 41–52 (SASAISSDSIST) shows a compositional bias: low complexity. Residue serine 58 is modified to Phosphoserine. The 72-residue stretch at 68 to 139 (NKLAEMEEPA…GVISRVEKIG (72 aa)) folds into the GRAM domain. Residues 205–580 (GWKLYDPLLE…RHLELWVGYY (376 aa)) form the Myotubularin phosphatase domain. 3 residues coordinate a 1,2-diacyl-sn-glycero-3-phospho-(1D-myo-inositol-3,5-bisphosphate): asparagine 330, asparagine 355, and isoleucine 356. 3 residues coordinate a 1,2-diacyl-sn-glycero-3-phospho-(1D-myo-inositol-3-phosphate): asparagine 330, asparagine 355, and isoleucine 356. Cysteine 417 (phosphocysteine intermediate) is an active-site residue. A 1,2-diacyl-sn-glycero-3-phospho-(1D-myo-inositol-3,5-bisphosphate)-binding residues include serine 418, aspartate 419, glycine 420, tryptophan 421, aspartate 422, arginine 423, arginine 459, and arginine 463. Positions 418, 419, 420, 421, 422, and 423 each coordinate a 1,2-diacyl-sn-glycero-3-phospho-(1D-myo-inositol-3-phosphate). Arginine 463 provides a ligand contact to a 1,2-diacyl-sn-glycero-3-phospho-(1D-myo-inositol-3-phosphate). A coiled-coil region spans residues 593–627 (IHSRYKELLAKRAELQRKVEELQREISNRSTSSSE). Residues 614–643 (LQREISNRSTSSSERASSPAQCVTPVQTVV) are disordered. The span at 620 to 631 (NRSTSSSERASS) shows a compositional bias: low complexity. Over residues 632–643 (PAQCVTPVQTVV) the composition is skewed to polar residues.

Belongs to the protein-tyrosine phosphatase family. Non-receptor class myotubularin subfamily. As to quaternary structure, homodimer (via coiled-coil domain). Heterotetramer consisting of one MTMR2 dimer and one SBF2/MTMR13 dimer; specifically in peripheral nerves stabilizes SBF2/MTMR13 at the membranes and increases MTMR2 catalytic activity towards phosphatidylinositol 3,5-bisphosphate and to a lesser extent towards phosphatidylinositol 3-phosphate. Heterodimer with SBF1/MTMR5; acts as an adapter for the phosphatase MTMR2 to regulate MTMR2 catalytic activity and subcellular location. Heterodimer with MTMR12. In terms of processing, phosphorylation at Ser-58 decreases MTMR2 localization to endocytic vesicular structures. As to expression, expressed in sciatic nerve and in Schwann cells (at protein level). Detected in adult dorsal root ganglia, neurons of the central nervous system, motor neurons, cell soma and neurites of sensory neurons, olfactory bulb, cerebellum and hippocampus.

It localises to the cytoplasm. The protein resides in the early endosome membrane. Its subcellular location is the perinuclear region. It is found in the cell projection. The protein localises to the axon. It localises to the endosome membrane. The catalysed reaction is a 1,2-diacyl-sn-glycero-3-phospho-(1D-myo-inositol-3,5-bisphosphate) + H2O = a 1,2-diacyl-sn-glycero-3-phospho-(1D-myo-inositol-5-phosphate) + phosphate. The enzyme catalyses a 1,2-diacyl-sn-glycero-3-phospho-(1D-myo-inositol-3-phosphate) + H2O = a 1,2-diacyl-sn-glycero-3-phospho-(1D-myo-inositol) + phosphate. It carries out the reaction 1,2-dioctanoyl-sn-glycero-3-phospho-(1-D-myo-inositol-3-phosphate) + H2O = 1,2-dioctanoyl-sn-glycero-3-phospho-(1D-myo-inositol) + phosphate. It catalyses the reaction 1,2-dioctanoyl-sn-glycero-3-phospho-(1D-myo-inositol-3,5-bisphosphate) + H2O = 1,2-dioctanoyl-sn-glycero-3-phospho-(1D-myo-inositol-5-phosphate) + phosphate. Functionally, lipid phosphatase that specifically dephosphorylates the D-3 position of phosphatidylinositol 3-phosphate and phosphatidylinositol 3,5-bisphosphate, generating phosphatidylinositol and phosphatidylinositol 5-phosphate. Regulates the level of these phosphoinositides critical for various biological processes including autophagy initiation and autophagosome maturation. The protein is Phosphatidylinositol-3,5-bisphosphate 3-phosphatase MTMR2 of Mus musculus (Mouse).